Consider the following 356-residue polypeptide: Zinc finger CCCH domain-containing protein 49 (356 aa).

2 consecutive C3H1-type zinc fingers follow at residues 120-146 (YSGTACPDFRKGGCKKGDSCEFAHGVF) and 155-177 (YRTQPCKDGGNCLRKICFFAHSP). Residues 209-235 (ISPVSGSPPMSPRADSESSPMTQSLSR) are disordered. Over residues 225–235 (ESSPMTQSLSR) the composition is skewed to polar residues.

In Arabidopsis thaliana (Mouse-ear cress), this protein is Zinc finger CCCH domain-containing protein 49.